Consider the following 395-residue polypeptide: Subtilisin-like protease 5 (395 aa).

An N-terminal signal peptide occupies residues 1 to 19 (MGFLTVLYLSLAALSVTNA). A propeptide spanning residues 20-115 (AQIMSAPNGA…VEPDAIISQH (96 aa)) is cleaved from the precursor. Positions 36–112 (YIVVMKDDTS…VAFVEPDAII (77 aa)) constitute an Inhibitor I9 domain. Residues 124 to 395 (PWGLSRLSNR…RRLLYNGSGR (272 aa)) enclose the Peptidase S8 domain. Catalysis depends on charge relay system residues aspartate 155 and histidine 186. N-linked (GlcNAc...) asparagine glycans are attached at residues asparagine 229 and asparagine 247. Catalysis depends on serine 341, which acts as the Charge relay system. Positions 374–395 (QPTIHNPGPDTTRRLLYNGSGR) are disordered. The N-linked (GlcNAc...) asparagine glycan is linked to asparagine 391.

It belongs to the peptidase S8 family.

The protein localises to the secreted. In terms of biological role, secreted subtilisin-like serine protease with keratinolytic activity that contributes to pathogenicity. In Arthroderma otae (strain ATCC MYA-4605 / CBS 113480) (Microsporum canis), this protein is Subtilisin-like protease 5 (SUB5).